Reading from the N-terminus, the 284-residue chain is MAELIDGKALAAKLQGKLAQKTAKLKEKTGQTPGLVVVLVGNNPASQIYVRNKERSALAAGFRSKVERLPEETSQEELLSLIETYNQNPDWHGILVQLPLPDHIDDEAVLLAIDPDKDVDGFHPLNMGKLWSGHPVMIPATPAGIMAMFHEYGVELEGKRAVVIGRSNIVGKPMAQLLLAKNATVTLTHSRTHNLAKTAKRADILVVAIGRGHFVTKDFVKEGAVVIDVGMNRDENGKLIGDVQFDEVSEIASLITPVPGGVGPMTITMLMEQTYQAFKRSLES.

NADP(+)-binding positions include 165–167 and Ser-190; that span reads GRS.

Belongs to the tetrahydrofolate dehydrogenase/cyclohydrolase family. Homodimer.

The catalysed reaction is (6R)-5,10-methylene-5,6,7,8-tetrahydrofolate + NADP(+) = (6R)-5,10-methenyltetrahydrofolate + NADPH. The enzyme catalyses (6R)-5,10-methenyltetrahydrofolate + H2O = (6R)-10-formyltetrahydrofolate + H(+). Its pathway is one-carbon metabolism; tetrahydrofolate interconversion. Functionally, catalyzes the oxidation of 5,10-methylenetetrahydrofolate to 5,10-methenyltetrahydrofolate and then the hydrolysis of 5,10-methenyltetrahydrofolate to 10-formyltetrahydrofolate. The protein is Bifunctional protein FolD of Streptococcus gordonii (strain Challis / ATCC 35105 / BCRC 15272 / CH1 / DL1 / V288).